Consider the following 368-residue polypeptide: Glutamate 5-kinase (368 aa).

Lys9 is an ATP binding site. Residues Ser49, Asp136, and Asn148 each contribute to the substrate site. ATP contacts are provided by residues 168–169 and 210–216; these read TD and TGGMMTK. Residues 275–353 enclose the PUA domain; the sequence is AGIITIDNGA…ADIENVLGYE (79 aa).

The protein belongs to the glutamate 5-kinase family.

It is found in the cytoplasm. The enzyme catalyses L-glutamate + ATP = L-glutamyl 5-phosphate + ADP. It participates in amino-acid biosynthesis; L-proline biosynthesis; L-glutamate 5-semialdehyde from L-glutamate: step 1/2. Functionally, catalyzes the transfer of a phosphate group to glutamate to form L-glutamate 5-phosphate. In Haemophilus influenzae (strain PittGG), this protein is Glutamate 5-kinase.